A 1913-amino-acid polypeptide reads, in one-letter code: GREB1-like protein (1913 aa).

Residues 86-96 (MEDDEDEEEMS) show a composition bias toward acidic residues. 4 disordered regions span residues 86–111 (MEDDEDEEEMSDSNSPPIPYSQKPAP), 281–309 (NGTSGHGGKSSSCSSTPSRPGNYSLSPRP), 1097–1157 (EAER…TSSI), and 1179–1207 (DSLDPPMASSTTSKPSSSSSSSAQALAWS). The span at 289 to 301 (KSSSCSSTPSRPG) shows a compositional bias: low complexity. Positions 1118–1157 (PQSNSSAVTGTSGSIMENGVSSSSTAGKPQQQLLTPTSSI) are enriched in polar residues. A compositionally biased stretch (low complexity) spans 1187–1200 (SSTTSKPSSSSSSS). A helical transmembrane segment spans residues 1832 to 1852 (GVFFSGLLLYLCDSFVGADLL).

The protein belongs to the GREB1 family. Expressed in the inner ear, with a high presence in the spiral ganglia, cochlear nerve bundles, and hair cells.

Its subcellular location is the membrane. Plays a major role in early metanephros and genital development. The protein is GREB1-like protein (Greb1l) of Mus musculus (Mouse).